Consider the following 171-residue polypeptide: uncharacterized protein (171 aa).

2 consecutive transmembrane segments (helical) span residues 13–35 (VGAS…IATA) and 50–72 (ATVL…AYVV).

Its subcellular location is the cell membrane. This is an uncharacterized protein from Treponema pallidum (strain Nichols).